The following is a 146-amino-acid chain: Early E3 16 kDa glycoprotein (146 aa).

2 N-linked (GlcNAc...) asparagine; by host glycosylation sites follow: Asn-51 and Asn-84.

Functionally, E3 proteins seem to be dispensable for virus growth in tissue culture cells. They are potentially important for virus growth under special conditions; E3 region may help adenoviruses to evade the immune surveillance of the host. The sequence is that of Early E3 16 kDa glycoprotein from Human adenovirus B serotype 3 (HAdV-3).